Reading from the N-terminus, the 286-residue chain is Diaminopimelate epimerase (286 aa).

Positions 22, 56, and 76 each coordinate substrate. Catalysis depends on Cys85, which acts as the Proton donor. Substrate is bound by residues 86–87 (GN), Asn169, Asn202, and 220–221 (ER). The active-site Proton acceptor is Cys229. 230–231 (GS) provides a ligand contact to substrate.

It belongs to the diaminopimelate epimerase family. In terms of assembly, homodimer.

It is found in the cytoplasm. It carries out the reaction (2S,6S)-2,6-diaminopimelate = meso-2,6-diaminopimelate. Its pathway is amino-acid biosynthesis; L-lysine biosynthesis via DAP pathway; DL-2,6-diaminopimelate from LL-2,6-diaminopimelate: step 1/1. Its function is as follows. Catalyzes the stereoinversion of LL-2,6-diaminopimelate (L,L-DAP) to meso-diaminopimelate (meso-DAP), a precursor of L-lysine and an essential component of the bacterial peptidoglycan. The protein is Diaminopimelate epimerase of Buchnera aphidicola subsp. Baizongia pistaciae (strain Bp).